Here is a 235-residue protein sequence, read N- to C-terminus: Phosphoribosylaminoimidazole-succinocarboxamide synthase (235 aa).

It belongs to the SAICAR synthetase family.

It catalyses the reaction 5-amino-1-(5-phospho-D-ribosyl)imidazole-4-carboxylate + L-aspartate + ATP = (2S)-2-[5-amino-1-(5-phospho-beta-D-ribosyl)imidazole-4-carboxamido]succinate + ADP + phosphate + 2 H(+). Its pathway is purine metabolism; IMP biosynthesis via de novo pathway; 5-amino-1-(5-phospho-D-ribosyl)imidazole-4-carboxamide from 5-amino-1-(5-phospho-D-ribosyl)imidazole-4-carboxylate: step 1/2. The chain is Phosphoribosylaminoimidazole-succinocarboxamide synthase from Chlorobium chlorochromatii (strain CaD3).